Here is a 308-residue protein sequence, read N- to C-terminus: tRNA dimethylallyltransferase (308 aa).

10–17 is a binding site for ATP; the sequence is GPTASGKT. 12-17 provides a ligand contact to substrate; it reads TASGKT. 2 interaction with substrate tRNA regions span residues 35–38 and 159–163; these read DSSL and QRIFR.

It belongs to the IPP transferase family. Monomer. Mg(2+) serves as cofactor.

It carries out the reaction adenosine(37) in tRNA + dimethylallyl diphosphate = N(6)-dimethylallyladenosine(37) in tRNA + diphosphate. Catalyzes the transfer of a dimethylallyl group onto the adenine at position 37 in tRNAs that read codons beginning with uridine, leading to the formation of N6-(dimethylallyl)adenosine (i(6)A). The protein is tRNA dimethylallyltransferase of Francisella philomiragia subsp. philomiragia (strain ATCC 25017 / CCUG 19701 / FSC 153 / O#319-036).